The following is an 845-amino-acid chain: Prickle-like protein 2 (845 aa).

The 109-residue stretch at 18 to 126 folds into the PET domain; sequence FDFQRSSTSD…NVRPFPVTMT (109 aa). Serine 92 bears the Phosphoserine mark. LIM zinc-binding domains are found at residues 128–193, 193–253, and 253–317; these read AICE…CLKP, PRCA…LYAE, and EYCD…EDPN. Disordered regions lie at residues 314–346 and 483–546; these read EDPNGSDSSDSAFQNARAKESRRSAKIGKNKGK and YSDM…GSME. Positions 318–327 are enriched in polar residues; that stretch reads GSDSSDSAFQ. Serine 319, serine 321, and serine 322 each carry phosphoserine. A phosphothreonine mark is found at threonine 535, threonine 537, and threonine 540. Residues serine 544 and serine 547 each carry the phosphoserine modification. Residues 558-581 are disordered; it reads AEGGAKRQEHLSRFSMPDLSKDSG. 2 positions are modified to phosphoserine: serine 608 and serine 643. Residues 642-700 are disordered; it reads QSFDFDGGIASSKLPGQEGVHIQPMSERTRRRTTSRDDNRRFRPHRSRRSRRSRSDNAL. Positions 683–693 are enriched in basic residues; it reads FRPHRSRRSRR. Position 732 is a phosphoserine (serine 732). Positions 823–845 are disordered; the sequence is STLGGRGQLHSRKRQKSKNCIIS. Residue cysteine 842 is modified to Cysteine methyl ester. A lipid anchor (S-farnesyl cysteine) is attached at cysteine 842. Positions 843–845 are cleaved as a propeptide — removed in mature form; sequence IIS.

The protein belongs to the prickle / espinas / testin family. As to expression, expressed in the hippocampus and cerebral cortex.

Its subcellular location is the nucleus membrane. The chain is Prickle-like protein 2 (Prickle2) from Mus musculus (Mouse).